Reading from the N-terminus, the 311-residue chain is Protoheme IX farnesyltransferase (311 aa).

9 helical membrane-spanning segments follow: residues 33 to 53 (VVML…PSPA), 55 to 75 (LWLL…AAAV), 104 to 124 (NALL…SSFI), 127 to 147 (LTAW…TLFL), 155 to 175 (IVIG…AVTG), 181 to 201 (GLLL…ALAL), 228 to 248 (IVLY…TRMM), 252 to 272 (YLVG…KLLV), and 287 to 307 (IIYL…FPIP).

It belongs to the UbiA prenyltransferase family. Protoheme IX farnesyltransferase subfamily.

The protein localises to the cell inner membrane. The catalysed reaction is heme b + (2E,6E)-farnesyl diphosphate + H2O = Fe(II)-heme o + diphosphate. Its pathway is porphyrin-containing compound metabolism; heme O biosynthesis; heme O from protoheme: step 1/1. Converts heme B (protoheme IX) to heme O by substitution of the vinyl group on carbon 2 of heme B porphyrin ring with a hydroxyethyl farnesyl side group. The protein is Protoheme IX farnesyltransferase of Teredinibacter turnerae (strain ATCC 39867 / T7901).